The chain runs to 141 residues: Large ribosomal subunit protein uL16 (141 aa).

Positions 1–16 are enriched in basic residues; it reads MLMPRKPPKGFRKPHH. A disordered region spans residues 1–27; that stretch reads MLMPRKPPKGFRKPHHPDRSGASKGGN.

The protein belongs to the universal ribosomal protein uL16 family. As to quaternary structure, part of the 50S ribosomal subunit.

In terms of biological role, binds 23S rRNA and is also seen to make contacts with the A and possibly P site tRNAs. The polypeptide is Large ribosomal subunit protein uL16 (Salinispora arenicola (strain CNS-205)).